Here is a 118-residue protein sequence, read N- to C-terminus: Small ribosomal subunit protein uS13 (118 aa).

A disordered region spans residues 93–118 (KKLPVRGQRTKTNARTRKGPRKLMKK).

This sequence belongs to the universal ribosomal protein uS13 family. Part of the 30S ribosomal subunit. Forms a loose heterodimer with protein S19. Forms two bridges to the 50S subunit in the 70S ribosome.

Located at the top of the head of the 30S subunit, it contacts several helices of the 16S rRNA. In the 70S ribosome it contacts the 23S rRNA (bridge B1a) and protein L5 of the 50S subunit (bridge B1b), connecting the 2 subunits; these bridges are implicated in subunit movement. Contacts the tRNAs in the A and P-sites. The chain is Small ribosomal subunit protein uS13 from Buchnera aphidicola subsp. Baizongia pistaciae (strain Bp).